A 554-amino-acid chain; its full sequence is MAPLLSQTLIHTGRFLLRRFLEPPPAVISAVAASRVCFHRYYSSKSLSLVSPLGLHCSSLFSPPALCNSAFSSSATSTTIEVQSTEHEVVIALGSNIGNRMNNFREALRLMKRGGICVTRHSCLYETAPVHVTDQPRFLNAAVRGVTKLGPHELLSVLKTIERDMGRKDGIRYGPRPLDLDILFYGKMRISSDKLIIPHERLWERSFVLAPLVDLLGSAVDNDTVAHWHSLAIHPGGIFQAWERLGGESLIGQDGIQRVLPIGDKLWDFSNKTHVMGILNLTPDSFSDGGKFQSIDSAVSRVRSMISEGADIIDIGAQSTRPMASRISSQEELDRLLPVLEAVRGMPEMEEKLISVDTFNSEVASEAISNGADILNDVSAGTLDPNMHKVVAESGVPYMAMHMRGDPCTMQNKENLQYDDVCKDVASELYLRVRDAELSGIPAWRVMIDPGIGFSKSVDHNLDIIMDLPKIREEMAKRSIAVSHAPILVGPSRKRFLGDICGRPEATDRDAATVASVTAGILGGANIIRVHNVRHNADAAKVCDAMLRRRRSKG.

A mitochondrion-targeting transit peptide spans 1–42; sequence MAPLLSQTLIHTGRFLLRRFLEPPPAVISAVAASRVCFHRYY. The tract at residues 90-215 is HPPK; sequence VIALGSNIGN…SFVLAPLVDL (126 aa). In terms of domain architecture, Pterin-binding spans 273 to 541; sequence THVMGILNLT…NVRHNADAAK (269 aa). Positions 275–554 are DHPS; it reads VMGILNLTPD…AMLRRRRSKG (280 aa). Asparagine 280 serves as a coordination point for Mg(2+). (7,8-dihydropterin-6-yl)methyl diphosphate contacts are provided by residues threonine 320, aspartate 357, asparagine 376, aspartate 449, lysine 494, and 529-531; that span reads RVH.

This sequence in the N-terminal section; belongs to the HPPK family. In the C-terminal section; belongs to the DHPS family. The cofactor is Mg(2+). Ubiquitous.

Its subcellular location is the mitochondrion. It catalyses the reaction 6-hydroxymethyl-7,8-dihydropterin + ATP = (7,8-dihydropterin-6-yl)methyl diphosphate + AMP + H(+). The enzyme catalyses (7,8-dihydropterin-6-yl)methyl diphosphate + 4-aminobenzoate = 7,8-dihydropteroate + diphosphate. It participates in cofactor biosynthesis; tetrahydrofolate biosynthesis; 2-amino-4-hydroxy-6-hydroxymethyl-7,8-dihydropteridine diphosphate from 7,8-dihydroneopterin triphosphate: step 4/4. The protein operates within cofactor biosynthesis; tetrahydrofolate biosynthesis; 7,8-dihydrofolate from 2-amino-4-hydroxy-6-hydroxymethyl-7,8-dihydropteridine diphosphate and 4-aminobenzoate: step 1/2. In terms of biological role, catalyzes the first two consecutive steps of tetrahydrofolate biosynthesis. This chain is Folate synthesis bifunctional protein, mitochondrial, found in Arabidopsis thaliana (Mouse-ear cress).